The following is a 234-amino-acid chain: Viral Fc-gamma receptor-like protein IR11 (234 aa).

Residues 1–23 (MQTYSTPLTLVIVTSLFLFTTQG) form the signal peptide. The region spanning 24 to 122 (SSSNAVEPTK…VKDTGVYLLQ (99 aa)) is the Ig-like V-type domain. At 24–182 (SSSNAVEPTK…DLKRQWSGLS (159 aa)) the chain is on the extracellular side. 3 N-linked (GlcNAc...) asparagine; by host glycosylation sites follow: Asn-57, Asn-105, and Asn-110. A helical membrane pass occupies residues 183 to 203 (LHCAWVSGMMIFVGALVICFL). Residues 204-234 (RSQRIGEQDAEHLRTDLDTEPLLLTVDGDLQ) lie on the Cytoplasmic side of the membrane.

It belongs to the RL11 family.

It localises to the membrane. This chain is Viral Fc-gamma receptor-like protein IR11, found in Homo sapiens (Human).